A 117-amino-acid polypeptide reads, in one-letter code: MRVKGGSITRQRRRRWLKLAKGYWGHKSIGFKTAKQAVVKSWTYAFRDRKQRKRDFRKLWISRINAAARNQGISYSQLMYKIKQSNIEINRKMLAEMAVHHQSDFENIVKLAIAKSA.

The protein belongs to the bacterial ribosomal protein bL20 family.

Functionally, binds directly to 23S ribosomal RNA and is necessary for the in vitro assembly process of the 50S ribosomal subunit. It is not involved in the protein synthesizing functions of that subunit. This Mesomycoplasma hyopneumoniae (strain 7448) (Mycoplasma hyopneumoniae) protein is Large ribosomal subunit protein bL20.